We begin with the raw amino-acid sequence, 700 residues long: Mitogen-activated protein kinase 9 (700 aa).

The 292-residue stretch at 107–398 (YRIQEVIGKG…AEEALTDPYF (292 aa)) folds into the Protein kinase domain. Residues 113 to 121 (IGKGSYGVV) and lysine 136 each bind ATP. The Proton acceptor role is filled by aspartate 233. Threonine 269 carries the post-translational modification Phosphothreonine. The TXY motif lies at 269–271 (TDY). Tyrosine 271 is modified (phosphotyrosine). The disordered stretch occupies residues 475-523 (EESNGSGSAIPMERKHASLPRSTTVHSTPIPPKEQPLAASLKSSRPVSD).

This sequence belongs to the protein kinase superfamily. CMGC Ser/Thr protein kinase family. MAP kinase subfamily. Post-translationally, dually phosphorylated on Thr-269 and Tyr-271, which activates the enzyme.

The enzyme catalyses L-seryl-[protein] + ATP = O-phospho-L-seryl-[protein] + ADP + H(+). It carries out the reaction L-threonyl-[protein] + ATP = O-phospho-L-threonyl-[protein] + ADP + H(+). Activated by threonine and tyrosine phosphorylation. The protein is Mitogen-activated protein kinase 9 (MPK9) of Oryza sativa subsp. japonica (Rice).